The primary structure comprises 883 residues: Phosphoenolpyruvate carboxylase (883 aa).

Catalysis depends on residues histidine 138 and lysine 546.

It belongs to the PEPCase type 1 family. Mg(2+) is required as a cofactor.

The enzyme catalyses oxaloacetate + phosphate = phosphoenolpyruvate + hydrogencarbonate. Its function is as follows. Forms oxaloacetate, a four-carbon dicarboxylic acid source for the tricarboxylic acid cycle. The sequence is that of Phosphoenolpyruvate carboxylase from Salmonella choleraesuis (strain SC-B67).